We begin with the raw amino-acid sequence, 361 residues long: Versatile peroxidase VPL2 (361 aa).

A signal peptide spans 1-22; the sequence is MSFKTLSALALALGAAVQFASA. Residues 23–30 constitute a propeptide that is removed on maturation; sequence AVPLVQKR. 4 disulfides stabilise this stretch: Cys33/Cys45, Cys44/Cys308, Cys64/Cys144, and Cys272/Cys337. 2 residues coordinate Mn(2+): Glu66 and Glu70. The active-site Proton acceptor is His77. Residues Asp78, Gly90, Asp92, and Ser94 each coordinate Ca(2+). Asn126 is a glycosylation site (N-linked (GlcNAc...) asparagine). Catalysis depends on Trp194, which acts as the Tryptophan radical intermediate. His199 is a heme b binding site. A Ca(2+)-binding site is contributed by Ser200. A heme b-binding site is contributed by 203–207; the sequence is AADKV. Asp205 contacts Mn(2+). The Ca(2+) site is built by Asp217, Thr219, Val222, and Asp224.

It belongs to the peroxidase family. Ligninase subfamily. It depends on heme b as a cofactor. The cofactor is Ca(2+).

Its subcellular location is the secreted. The enzyme catalyses 1-(4-hydroxy-3-methoxyphenyl)-2-(2-methoxyphenoxy)propane-1,3-diol + H2O2 = guaiacol + vanillin + glycolaldehyde + H2O. It carries out the reaction 2 Mn(2+) + H2O2 + 2 H(+) = 2 Mn(3+) + 2 H2O. Functionally, a versatile ligninolytic peroxidase that combines the substrate specificity characteristics of the two other ligninolytic peroxidases, manganese peroxidase and lignin peroxidase. The polypeptide is Versatile peroxidase VPL2 (vpl2) (Pleurotus eryngii (Boletus of the steppes)).